A 355-amino-acid polypeptide reads, in one-letter code: F-box only protein 32 (355 aa).

Residues 62–67 (KKRKKD) carry the Nuclear localization signal motif. The short motif at 169 to 173 (LLQTL) is the Nuclear export signal element. One can recognise an F-box domain in the interval 223–271 (LTFTDLPLCLQLNIMQRLSDGRDLVSLGQVAPDLHVLSEDRLLWKKLCQ). The Bipartite nuclear localization signal motif lies at 280 to 295 (RKRLILSDKGQLDWKK).

As to quaternary structure, part of the SCF (SKP1-CUL1-F-box) E3 ubiquitin-protein ligase complex SCF(FBXO32) formed of CUL1, SKP1, RBX1 and FBXO32.

Its subcellular location is the cytoplasm. It localises to the nucleus. The protein operates within protein modification; protein ubiquitination. Functionally, substrate recognition component of a SCF (SKP1-CUL1-F-box protein) E3 ubiquitin-protein ligase complex which mediates the ubiquitination and subsequent proteasomal degradation of target proteins. Probably recognizes and binds to phosphorylated target proteins during skeletal muscle atrophy. Recognizes TERF1. This Bos taurus (Bovine) protein is F-box only protein 32 (FBXO32).